The following is a 198-amino-acid chain: Adenylate kinase (198 aa).

Position 10–15 (G10–T15) interacts with ATP. The NMP stretch occupies residues S30–V59. AMP is bound by residues T31, R36, E57 to V59, G85 to R88, and Q92. The LID stretch occupies residues K126–D142. R127 provides a ligand contact to ATP. AMP-binding residues include R139 and R150. Residue A178 participates in ATP binding.

This sequence belongs to the adenylate kinase family. As to quaternary structure, monomer.

It localises to the cytoplasm. It catalyses the reaction AMP + ATP = 2 ADP. Its pathway is purine metabolism; AMP biosynthesis via salvage pathway; AMP from ADP: step 1/1. In terms of biological role, catalyzes the reversible transfer of the terminal phosphate group between ATP and AMP. Plays an important role in cellular energy homeostasis and in adenine nucleotide metabolism. The polypeptide is Adenylate kinase (Mesorhizobium japonicum (strain LMG 29417 / CECT 9101 / MAFF 303099) (Mesorhizobium loti (strain MAFF 303099))).